Reading from the N-terminus, the 359-residue chain is Protein Wnt-5a (359 aa).

The first 20 residues, 1-20 (MATTHLTAALALLCALLQVD), serve as a signal peptide directing secretion. A disulfide bond links Cys83 and Cys94. 2 N-linked (GlcNAc...) asparagine glycosylation sites follow: Asn93 and Asn99. Cystine bridges form between Cys133–Cys141, Cys143–Cys161, Cys217–Cys231, Cys219–Cys226, Cys288–Cys319, Cys304–Cys314, Cys318–Cys358, Cys334–Cys349, Cys336–Cys346, and Cys341–Cys342. Ser223 carries O-palmitoleoyl serine; by PORCN lipidation. N-linked (GlcNAc...) asparagine glycans are attached at residues Asn291 and Asn305.

The protein belongs to the Wnt family. In terms of processing, palmitoleoylation is required for efficient binding to frizzled receptors. Depalmitoleoylation leads to Wnt signaling pathway inhibition. As to expression, neuroectodermal and non-neuroectodermal tissues.

It localises to the secreted. Its subcellular location is the extracellular space. It is found in the extracellular matrix. Ligand for members of the frizzled family of seven transmembrane receptors. Can activate or inhibit canonical Wnt signaling, depending on receptor context. Required during embryogenesis for extension of the primary anterior-posterior axis. This is Protein Wnt-5a (WNT-5A) from Ambystoma mexicanum (Axolotl).